A 469-amino-acid chain; its full sequence is Aryl-phospho-beta-D-glucosidase BglH (469 aa).

The active-site Proton donor is Glu175. Catalysis depends on Glu368, which acts as the Nucleophile.

This sequence belongs to the glycosyl hydrolase 1 family.

The enzyme catalyses 6-phospho-beta-D-glucosyl-(1-&gt;4)-D-glucose + H2O = D-glucose 6-phosphate + D-glucose. Catalyzes the hydrolysis of aryl-phospho-beta-D-glucosides such as 4-methylumbelliferyl-phospho-beta-D-glucopyranoside (MUG-P), phosphoarbutin and phosphosalicin. Plays a major role in the utilization of arbutin or salicin as the sole carbon source. BglA and BglH are the major proteins contributing to hydrolysis of MUG-P by extracts of late-exponential-phase or stationary-phase B.subtilis cells. The chain is Aryl-phospho-beta-D-glucosidase BglH (bglH) from Bacillus subtilis (strain 168).